Consider the following 615-residue polypeptide: DNA mismatch repair protein MutL (615 aa).

A disordered region spans residues 362–397; sequence HFAEPAVREPVAPRYSPAPASGGRPAASWPNAQPGY. Residues 378–391 show a composition bias toward low complexity; that stretch reads PAPASGGRPAASWP.

This sequence belongs to the DNA mismatch repair MutL/HexB family.

Functionally, this protein is involved in the repair of mismatches in DNA. It is required for dam-dependent methyl-directed DNA mismatch repair. May act as a 'molecular matchmaker', a protein that promotes the formation of a stable complex between two or more DNA-binding proteins in an ATP-dependent manner without itself being part of a final effector complex. In Escherichia fergusonii (strain ATCC 35469 / DSM 13698 / CCUG 18766 / IAM 14443 / JCM 21226 / LMG 7866 / NBRC 102419 / NCTC 12128 / CDC 0568-73), this protein is DNA mismatch repair protein MutL.